The primary structure comprises 426 residues: 3-phosphoshikimate 1-carboxyvinyltransferase (426 aa).

Residues K22, S23, and R27 each coordinate 3-phosphoshikimate. K22 serves as a coordination point for phosphoenolpyruvate. Phosphoenolpyruvate-binding residues include G96 and R124. 3-phosphoshikimate contacts are provided by S170, S171, Q172, S198, D314, N337, and K341. Phosphoenolpyruvate is bound at residue Q172. D314 (proton acceptor) is an active-site residue. Phosphoenolpyruvate contacts are provided by R345, R387, and K412.

The protein belongs to the EPSP synthase family. In terms of assembly, monomer.

The protein localises to the cytoplasm. The catalysed reaction is 3-phosphoshikimate + phosphoenolpyruvate = 5-O-(1-carboxyvinyl)-3-phosphoshikimate + phosphate. It participates in metabolic intermediate biosynthesis; chorismate biosynthesis; chorismate from D-erythrose 4-phosphate and phosphoenolpyruvate: step 6/7. In terms of biological role, catalyzes the transfer of the enolpyruvyl moiety of phosphoenolpyruvate (PEP) to the 5-hydroxyl of shikimate-3-phosphate (S3P) to produce enolpyruvyl shikimate-3-phosphate and inorganic phosphate. The protein is 3-phosphoshikimate 1-carboxyvinyltransferase of Shewanella sp. (strain ANA-3).